Here is a 669-residue protein sequence, read N- to C-terminus: DNA mismatch repair protein MutL (669 aa).

The segment at 343 to 408 is disordered; the sequence is SAFHRAEPEE…RAPSDSSVRE (66 aa). A compositionally biased stretch (basic and acidic residues) spans 344–356; sequence AFHRAEPEERESQ. Residues 357–372 show a composition bias toward polar residues; sequence PETTPQYSPQSVSTTV. Positions 390 to 408 are enriched in basic and acidic residues; that stretch reads TDYEIKPRDRAPSDSSVRE.

This sequence belongs to the DNA mismatch repair MutL/HexB family.

This protein is involved in the repair of mismatches in DNA. It is required for dam-dependent methyl-directed DNA mismatch repair. May act as a 'molecular matchmaker', a protein that promotes the formation of a stable complex between two or more DNA-binding proteins in an ATP-dependent manner without itself being part of a final effector complex. This is DNA mismatch repair protein MutL from Vibrio parahaemolyticus serotype O3:K6 (strain RIMD 2210633).